The primary structure comprises 483 residues: MSNNFKDDFEKNRQSIDTNSHQDHTEEVEKDQSELEHQDTIENTEQQFPPRNAQRRKRRRDLATNHNKQVHNESQTSEDNVQNEAGTIDDHQVESSHSTESQEPSHQDSTPQHEEEYYNKNAFAMDKSHPEPIEDNDKHETVKDAENNTEHSTVSDKSEAEQSQQPKPYFATGANQANTSKDKHDDVTVKQYKDESKDHHSGKKGAAIGAGTAGVAGAMAASKAKKHSNDAQNKSNSGKANNSTEDKASQDKSKEHHNGKKGAAIGAGTAGLAGGAASKSASAASKPHASNNASQNHDEHDHHDRDKERKKGGMAKVLLPLIAAVLIIGALAIFGGMALNNHNNGTKENKIANTNKNNADESKDKDTSKDASKDKSKSTDSDKSKEDQDKATKDESDNDQNNANQANNQAQNNQNQQQANQNQQQQQQRQGGGQRHTVNGQENLYRIAIQYYGSGSPENVEKIRRANGLSGNNIRNGQQIVIP.

Residues methionine 1 to threonine 40 are compositionally biased toward basic and acidic residues. A disordered region spans residues methionine 1–lysine 311. The tract at residues glutamine 14–glutamate 34 is elastin-binding. Residues threonine 64 to alanine 85 show a composition bias toward polar residues. Basic and acidic residues-rich tracts occupy residues glutamate 103–tyrosine 118, aspartate 126–alanine 160, and serine 180–histidine 199. Residues lysine 204–serine 222 are compositionally biased toward low complexity. The segment covering aspartate 230–serine 243 has biased composition (polar residues). Residues threonine 244–histidine 256 are compositionally biased toward basic and acidic residues. Positions glycine 275–serine 294 are enriched in low complexity. Residues asparagine 296–lysine 311 are compositionally biased toward basic and acidic residues. A helical transmembrane segment spans residues valine 317–methionine 337. A disordered region spans residues glutamate 348–threonine 437. Basic and acidic residues predominate over residues asparagine 358–glutamate 395. Residues glutamine 400 to glutamine 428 show a composition bias toward low complexity. One can recognise a LysM domain in the interval glutamine 434–isoleucine 482.

It localises to the cell membrane. Promotes binding of soluble elastin peptides and tropoelastin to S.aureus cells although it is not able to promote bacterial adherence to immobilized elastin and, therefore, is not a microbial surface component recognizing adhesive matrix molecule (MSCRAMM). In Staphylococcus aureus (strain bovine RF122 / ET3-1), this protein is Elastin-binding protein EbpS (ebpS).